The chain runs to 76 residues: Small ribosomal subunit protein bS18 (76 aa).

Belongs to the bacterial ribosomal protein bS18 family. Part of the 30S ribosomal subunit. Forms a tight heterodimer with protein bS6.

Its function is as follows. Binds as a heterodimer with protein bS6 to the central domain of the 16S rRNA, where it helps stabilize the platform of the 30S subunit. The sequence is that of Small ribosomal subunit protein bS18 from Azotobacter vinelandii (strain DJ / ATCC BAA-1303).